We begin with the raw amino-acid sequence, 596 residues long: Elongation factor 4 (596 aa).

One can recognise a tr-type G domain in the interval Lys2–Glu184. Residues Asp14–Thr19 and Asn131–Asp134 each bind GTP.

It belongs to the TRAFAC class translation factor GTPase superfamily. Classic translation factor GTPase family. LepA subfamily.

Its subcellular location is the cell inner membrane. It catalyses the reaction GTP + H2O = GDP + phosphate + H(+). Required for accurate and efficient protein synthesis under certain stress conditions. May act as a fidelity factor of the translation reaction, by catalyzing a one-codon backward translocation of tRNAs on improperly translocated ribosomes. Back-translocation proceeds from a post-translocation (POST) complex to a pre-translocation (PRE) complex, thus giving elongation factor G a second chance to translocate the tRNAs correctly. Binds to ribosomes in a GTP-dependent manner. The protein is Elongation factor 4 of Shewanella putrefaciens (strain CN-32 / ATCC BAA-453).